Consider the following 195-residue polypeptide: MKIGVLGLQGAVQEHVRAIEACGAEAVVVKKTEQLTGLDGLVLPGGESTTMRRLIDRYGLMEPLKQFAADGKPMFGTCAGLILLAKRIVGYDEPHLGLMDITVERNSFGRQRESFEAELSIKGVGDGFVGVFIRAPHIVEVGDEVEVLATYNDRIVAARQGQFLGCSFHPELTDDHRLMRYFLNMVKEAKTVSSI.

46–48 (GES) contributes to the L-glutamine binding site. Cys-78 functions as the Nucleophile in the catalytic mechanism. Residues Arg-105 and 133–134 (IR) contribute to the L-glutamine site. Residues His-169 and Glu-171 each act as charge relay system in the active site.

The protein belongs to the glutaminase PdxT/SNO family. As to quaternary structure, in the presence of PdxS, forms a dodecamer of heterodimers. Only shows activity in the heterodimer.

The catalysed reaction is aldehydo-D-ribose 5-phosphate + D-glyceraldehyde 3-phosphate + L-glutamine = pyridoxal 5'-phosphate + L-glutamate + phosphate + 3 H2O + H(+). It carries out the reaction L-glutamine + H2O = L-glutamate + NH4(+). The protein operates within cofactor biosynthesis; pyridoxal 5'-phosphate biosynthesis. Its function is as follows. Catalyzes the hydrolysis of glutamine to glutamate and ammonia as part of the biosynthesis of pyridoxal 5'-phosphate. The resulting ammonia molecule is channeled to the active site of PdxS. In Geobacillus thermodenitrificans (strain NG80-2), this protein is Pyridoxal 5'-phosphate synthase subunit PdxT.